The sequence spans 84 residues: Cell division topological specificity factor (84 aa).

Belongs to the MinE family.

Functionally, prevents the cell division inhibition by proteins MinC and MinD at internal division sites while permitting inhibition at polar sites. This ensures cell division at the proper site by restricting the formation of a division septum at the midpoint of the long axis of the cell. This is Cell division topological specificity factor from Burkholderia ambifaria (strain MC40-6).